The sequence spans 665 residues: DNA ligase (665 aa).

NAD(+) contacts are provided by residues 34–38 (DEEYD), 83–84 (SL), and E114. Catalysis depends on K116, which acts as the N6-AMP-lysine intermediate. NAD(+) is bound by residues R137, E171, K287, and K311. Positions 405, 408, 424, and 429 each coordinate Zn(2+). The region spanning 587–665 (KKSSKLAGLT…EDEFKKMIID (79 aa)) is the BRCT domain.

It belongs to the NAD-dependent DNA ligase family. LigA subfamily. Mg(2+) is required as a cofactor. The cofactor is Mn(2+).

It carries out the reaction NAD(+) + (deoxyribonucleotide)n-3'-hydroxyl + 5'-phospho-(deoxyribonucleotide)m = (deoxyribonucleotide)n+m + AMP + beta-nicotinamide D-nucleotide.. Its function is as follows. DNA ligase that catalyzes the formation of phosphodiester linkages between 5'-phosphoryl and 3'-hydroxyl groups in double-stranded DNA using NAD as a coenzyme and as the energy source for the reaction. It is essential for DNA replication and repair of damaged DNA. This chain is DNA ligase, found in Thermosipho africanus (strain TCF52B).